Consider the following 189-residue polypeptide: RxLR effector protein CRE18 (189 aa).

The N-terminal stretch at 1–23 is a signal peptide; the sequence is MSKLFYAFAVLAVHVLTSSPTTA. A RxLR-dEER motif is present at residues 47–68; it reads RFLRSIHEGEDSLKPSAFSEER.

The protein belongs to the RxLR effector family.

It localises to the secreted. The protein localises to the host cytoplasm. The protein resides in the host nucleus. Effector that is involved in host plant infection. Contributes to virulence during the early infection stage, by inhibiting plant defense responses induced by both PAMP-triggered immunity (PTI) and effector-triggered immunity (ETI). The chain is RxLR effector protein CRE18 from Phytophthora infestans (strain T30-4) (Potato late blight agent).